A 386-amino-acid chain; its full sequence is Citrate synthase (386 aa).

Residues histidine 266 and aspartate 322 contribute to the active site.

Belongs to the citrate synthase family.

The enzyme catalyses oxaloacetate + acetyl-CoA + H2O = citrate + CoA + H(+). Its pathway is carbohydrate metabolism; tricarboxylic acid cycle; isocitrate from oxaloacetate: step 1/2. This Acidithiobacillus ferridurans protein is Citrate synthase (gltA).